The primary structure comprises 326 residues: Olfactory receptor 11H12 (326 aa).

At 1–44 (MCPLTLQVTGLMNVSEPNSSFAFVNEFILQGFTCEWTIQIFLFS) the chain is on the extracellular side. N-linked (GlcNAc...) asparagine glycosylation is found at Asn-13 and Asn-18. A helical transmembrane segment spans residues 45-65 (LFTTTYALTITGNGAIAFVLW). Topologically, residues 66–72 (CDWRLHT) are cytoplasmic. A helical transmembrane segment spans residues 73 to 93 (PMYMFLGNFSFLEIWYVSSTV). Topologically, residues 94-112 (PKMLVNFLSEKKNISFAGC) are extracellular. Asn-106 carries an N-linked (GlcNAc...) asparagine glycan. Cys-112 and Cys-194 form a disulfide bridge. Residues 113 to 133 (FLQFYFFFSLGTSECLLLTVM) traverse the membrane as a helical segment. Topologically, residues 134–158 (AFDQYLAICRPLLYPNIMTGHLCAK) are cytoplasmic. A helical membrane pass occupies residues 159 to 179 (LVILCWVCGFLWFLIPIVLIS). The Extracellular segment spans residues 180–216 (QMPFCGPNIIDHVVCDPGPRFALDCVSAPRIQLFCYT). The chain crosses the membrane as a helical span at residues 217–237 (LSSLVIFGNFLFIIGSYTLVL). Residues 238–259 (KAVLGMPSSTGRHKAFSTCGSH) lie on the Cytoplasmic side of the membrane. A helical membrane pass occupies residues 260 to 280 (LAVVSLCYSSLMVMYVSPGLG). Residues 281-287 (HSTGMQK) lie on the Extracellular side of the membrane. The chain crosses the membrane as a helical span at residues 288 to 308 (IETLFYAMVTPLFNPLIYSLQ). The Cytoplasmic segment spans residues 309–326 (NKEIKAALRKVLGSSNII).

Belongs to the G-protein coupled receptor 1 family.

The protein localises to the cell membrane. Functionally, odorant receptor. This is Olfactory receptor 11H12 (OR11H12) from Homo sapiens (Human).